Consider the following 157-residue polypeptide: UPF0251 protein CLK_0815 (157 aa).

It belongs to the UPF0251 family.

This Clostridium botulinum (strain Loch Maree / Type A3) protein is UPF0251 protein CLK_0815.